The following is a 216-amino-acid chain: Imidazole glycerol phosphate synthase subunit HisH 1 (216 aa).

In terms of domain architecture, Glutamine amidotransferase type-1 spans 4 to 216; it reads CVLIVDAGLG…LQNFIALNPC (213 aa). Residue Cys84 is the Nucleophile of the active site. Active-site residues include His195 and Glu197.

As to quaternary structure, heterodimer of HisH and HisF.

The protein resides in the cytoplasm. It catalyses the reaction 5-[(5-phospho-1-deoxy-D-ribulos-1-ylimino)methylamino]-1-(5-phospho-beta-D-ribosyl)imidazole-4-carboxamide + L-glutamine = D-erythro-1-(imidazol-4-yl)glycerol 3-phosphate + 5-amino-1-(5-phospho-beta-D-ribosyl)imidazole-4-carboxamide + L-glutamate + H(+). It carries out the reaction L-glutamine + H2O = L-glutamate + NH4(+). Its pathway is amino-acid biosynthesis; L-histidine biosynthesis; L-histidine from 5-phospho-alpha-D-ribose 1-diphosphate: step 5/9. IGPS catalyzes the conversion of PRFAR and glutamine to IGP, AICAR and glutamate. The HisH subunit provides the glutamine amidotransferase activity that produces the ammonia necessary to HisF for the synthesis of IGP and AICAR. In Prochlorococcus marinus (strain MIT 9313), this protein is Imidazole glycerol phosphate synthase subunit HisH 1 (hisH1).